A 548-amino-acid polypeptide reads, in one-letter code: uncharacterized protein (548 aa).

The DhaL domain occupies 8–200 (KLFADMIIQG…LLCVYEGFLK (193 aa)).

This is an uncharacterized protein from Staphylococcus aureus (strain bovine RF122 / ET3-1).